Consider the following 683-residue polypeptide: DNA-directed RNA polymerase subunit beta' (683 aa).

Zn(2+) is bound by residues Cys69, Cys71, Cys87, and Cys90. Asp489, Asp491, and Asp493 together coordinate Mg(2+).

It belongs to the RNA polymerase beta' chain family. RpoC1 subfamily. In terms of assembly, in plastids the minimal PEP RNA polymerase catalytic core is composed of four subunits: alpha, beta, beta', and beta''. When a (nuclear-encoded) sigma factor is associated with the core the holoenzyme is formed, which can initiate transcription. Mg(2+) is required as a cofactor. Requires Zn(2+) as cofactor.

It is found in the plastid. The protein resides in the chloroplast. The enzyme catalyses RNA(n) + a ribonucleoside 5'-triphosphate = RNA(n+1) + diphosphate. In terms of biological role, DNA-dependent RNA polymerase catalyzes the transcription of DNA into RNA using the four ribonucleoside triphosphates as substrates. This chain is DNA-directed RNA polymerase subunit beta', found in Triticum aestivum (Wheat).